Reading from the N-terminus, the 493-residue chain is Glutamyl-tRNA(Gln) amidotransferase subunit A (493 aa).

Residues lysine 78 and serine 158 each act as charge relay system in the active site. Serine 182 functions as the Acyl-ester intermediate in the catalytic mechanism.

This sequence belongs to the amidase family. GatA subfamily. Heterotrimer of A, B and C subunits.

The catalysed reaction is L-glutamyl-tRNA(Gln) + L-glutamine + ATP + H2O = L-glutaminyl-tRNA(Gln) + L-glutamate + ADP + phosphate + H(+). Functionally, allows the formation of correctly charged Gln-tRNA(Gln) through the transamidation of misacylated Glu-tRNA(Gln) in organisms which lack glutaminyl-tRNA synthetase. The reaction takes place in the presence of glutamine and ATP through an activated gamma-phospho-Glu-tRNA(Gln). This Rickettsia canadensis (strain McKiel) protein is Glutamyl-tRNA(Gln) amidotransferase subunit A.